The primary structure comprises 2626 residues: Unconventional myosin-IXa (2626 aa).

One can recognise a Ras-associating domain in the interval 14–112 (NEHTLRIYPG…YRFLLREKNL (99 aa)). One can recognise a Myosin motor domain in the interval 146–1017 (KDFDDLCSLP…ERQHLQDLLH (872 aa)). A helical transmembrane segment spans residues 175 to 195 (IYTYVGSILIAINPFKFLPIY). 239 to 246 (GESGSGKT) contributes to the ATP binding site. At S755 the chain carries Phosphoserine. The interval 908 to 919 (QAEPYFVKCIRS) is actin-binding. IQ domains lie at 1021–1041 (LRRI…QQFL), 1043–1072 (LRQA…EKDA), 1075–1104 (MASA…AAVI), 1116–1145 (RHRA…KIIL), and 1139–1168 (QRNK…ERLK). The tract at residues 1022–1163 (RRIILLQRWF…RARQRYKALK (142 aa)) is neck or regulatory domain. The tail stretch occupies residues 1164-2589 (EERLKETKLE…LKNVKNSPQK (1426 aa)). Residues 1221 to 1240 (RESSMDFSKESPDKQQERGR) show a composition bias toward basic and acidic residues. The disordered stretch occupies residues 1221 to 1276 (RESSMDFSKESPDKQQERGRSQSGTDLQGDVIVRQRPKSLEDLHQKKVGRAKRESR). S1243 bears the Phosphoserine mark. The residue at position 1245 (T1245) is a Phosphothreonine. A Phosphoserine modification is found at S1259. The stretch at 1265–1292 (QKKVGRAKRESRRMRELEQAIFSLELLK) forms a coiled coil. Positions 1266-1276 (KKVGRAKRESR) are enriched in basic residues. S1300 and S1318 each carry phosphoserine. A compositionally biased stretch (polar residues) spans 1360-1375 (PSTFTNPKFDSQNNAL). The disordered stretch occupies residues 1360-1397 (PSTFTNPKFDSQNNALSASSETSSTFSGKGASSDSEHL). Low complexity predominate over residues 1376-1386 (SASSETSSTFS). A coiled-coil region spans residues 1493–1540 (TVLKKLEKLNIEKEKRQKQLQQQNEKEMMEQIRQQTDILEKERKAFKT). Disordered stretches follow at residues 1562 to 1602 (VERP…PPKD), 1618 to 1673 (SRTV…SRPI), 1689 to 1726 (GNPQ…RMAR), 1765 to 1784 (SELG…SEMT), and 1872 to 1907 (QYHP…KRGV). Basic and acidic residues-rich tracts occupy residues 1620 to 1632 (TVKE…RMGT) and 1659 to 1669 (HRSDDPSREGS). The span at 1716-1726 (PAHKKKARMAR) shows a compositional bias: basic residues. Residues 1772–1784 (SLGQASHSDSEMT) are compositionally biased toward polar residues. The segment covering 1887 to 1899 (CRKEFKENKEPSP) has biased composition (basic and acidic residues). The residue at position 2016 (S2016) is a Phosphoserine. The segment at 2067–2116 (GHMFKATQYSIPTYCEYCSSLIWIMDRASVCKLCKYACHKKCCLKTTAKC) adopts a Phorbol-ester/DAG-type zinc-finger fold. The Rho-GAP domain maps to 2131-2319 (VELSRLTSED…LIVVEQMNKY (189 aa)). Positions 2365 to 2385 (SGKGRLHRGSHPNPSSPVIVR) are disordered. Phosphoserine is present on S2380. The stretch at 2408 to 2444 (TDQQQAAMQQEEKVLTEQIENLQKEKEELTFEMLVLE) forms a coiled coil. Residues 2449-2527 (DDEALESEAS…NTTSSHGTRK (79 aa)) form a disordered region. Over residues 2504–2522 (SLDSVSSSVSSCLSNTTSS) the composition is skewed to low complexity. The residue at position 2542 (S2542) is a Phosphoserine. A disordered region spans residues 2552–2614 (PLGQAKSLED…TVDSDCSSTQ (63 aa)).

This sequence belongs to the TRAFAC class myosin-kinesin ATPase superfamily. Myosin family. In terms of processing, phosphorylated by ALPK1 following monosodium urate monohydrate (MSU)-induced inflammation. In terms of tissue distribution, expressed at high levels in brain, followed by testis and spleen. Expressed at very low levels, in kidney. Detected abundantly in brain and testis and at lower levels in adrenal gland, kidney, lung and spleen (at protein level). In adrenal gland it is mostly found in the medulla but not in the cortex. In brain, it is found in the cerebellum and the CA2-CA3 regions of the hippocampus.

Its subcellular location is the membrane. It localises to the cytoplasm. The protein resides in the synapse. The protein localises to the cell projection. It is found in the growth cone. Functionally, myosins are actin-based motor molecules with ATPase activity. Unconventional myosins serve in intracellular movements. Regulates Rho by stimulating it's GTPase activity in neurons. Required for the regulation of neurite branching and motor neuron axon guidance. In Rattus norvegicus (Rat), this protein is Unconventional myosin-IXa (Myo9a).